The primary structure comprises 383 residues: S-adenosylmethionine synthase (383 aa).

Histidine 22 is an ATP binding site. Aspartate 24 contributes to the Mg(2+) binding site. Glutamate 50 is a K(+) binding site. The L-methionine site is built by glutamate 63 and glutamine 99. A flexible loop region spans residues 99 to 109 (QSSEINQAVQS). Residues 160 to 162 (DMK), aspartate 235, 241 to 242 (RK), serine 258, and lysine 262 contribute to the ATP site. Aspartate 235 lines the L-methionine pocket. An L-methionine-binding site is contributed by lysine 266.

It belongs to the AdoMet synthase family. In terms of assembly, homotetramer; dimer of dimers. Mg(2+) is required as a cofactor. Requires K(+) as cofactor.

The protein localises to the cytoplasm. The enzyme catalyses L-methionine + ATP + H2O = S-adenosyl-L-methionine + phosphate + diphosphate. It participates in amino-acid biosynthesis; S-adenosyl-L-methionine biosynthesis; S-adenosyl-L-methionine from L-methionine: step 1/1. Functionally, catalyzes the formation of S-adenosylmethionine (AdoMet) from methionine and ATP. The overall synthetic reaction is composed of two sequential steps, AdoMet formation and the subsequent tripolyphosphate hydrolysis which occurs prior to release of AdoMet from the enzyme. In Mycoplasma pneumoniae (strain ATCC 29342 / M129 / Subtype 1) (Mycoplasmoides pneumoniae), this protein is S-adenosylmethionine synthase.